The following is a 570-amino-acid chain: Probable D-xylulose kinase A (570 aa).

Substrate contacts are provided by His95, Arg166, Asp282, and Asn283. ATP is bound by residues Trp364, 469-470 (GG), and Asn473.

This sequence belongs to the FGGY kinase family.

It is found in the cytoplasm. The catalysed reaction is D-xylulose + ATP = D-xylulose 5-phosphate + ADP + H(+). Its function is as follows. Highly specific D-xylulose kinase which participates in the catabolism of xylose. Xylose is a major component of hemicelluloses such as xylan. Most fungi utilize D-xylose via three enzymatic reactions, xylose reductase (XR), xylitol dehydrogenase (XDH), and xylulokinase, to form xylulose 5-phosphate, which enters pentose phosphate pathway. The sequence is that of Probable D-xylulose kinase A (xkiA) from Aspergillus niger (strain ATCC MYA-4892 / CBS 513.88 / FGSC A1513).